Consider the following 236-residue polypeptide: Small ribosomal subunit protein uS2c (236 aa).

This sequence belongs to the universal ribosomal protein uS2 family.

Its subcellular location is the plastid. It localises to the chloroplast. The polypeptide is Small ribosomal subunit protein uS2c (rps2) (Aethionema grandiflorum (Persian stone-cress)).